Here is a 90-residue protein sequence, read N- to C-terminus: Early nodulin-36A (90 aa).

This chain is Early nodulin-36A, found in Glycine max (Soybean).